The sequence spans 69 residues: Sperm protamine P1 (69 aa).

2 stretches are compositionally biased toward basic residues: residues 1–30 (MARF…RRGG) and 37–69 (KITR…RRRN). The disordered stretch occupies residues 1-69 (MARFRPSRSR…SRRRRRRRRN (69 aa)).

Belongs to the protamine P1 family. Testis.

The protein resides in the nucleus. The protein localises to the chromosome. In terms of biological role, protamines substitute for histones in the chromatin of sperm during the haploid phase of spermatogenesis. They compact sperm DNA into a highly condensed, stable and inactive complex. This Tachyglossus aculeatus aculeatus (Southeast Australian short-beaked echidna) protein is Sperm protamine P1 (PRM1).